The primary structure comprises 163 residues: Ribonuclease P protein subunit p25-like protein (163 aa).

2 disordered regions span residues 1-22 (MEHYRKAGSVELPAPSPMPQLP) and 129-163 (NECGYQPPGAPPGLGSMPSSSCGPRSRRRARDTRS). A compositionally biased stretch (low complexity) spans 143–152 (GSMPSSSCGP). A compositionally biased stretch (basic residues) spans 153–163 (RSRRRARDTRS).

Belongs to the histone-like Alba family.

The protein localises to the nucleus. May be a component of ribonuclease P or MRP. The protein is Ribonuclease P protein subunit p25-like protein (RPP25L) of Homo sapiens (Human).